A 2282-amino-acid polypeptide reads, in one-letter code: Protein Ycf2 (2282 aa).

1637–1644 (GSIGTGRS) serves as a coordination point for ATP.

The protein belongs to the Ycf2 family.

The protein resides in the plastid. The protein localises to the chloroplast stroma. Its function is as follows. Probable ATPase of unknown function. Its presence in a non-photosynthetic plant (Epifagus virginiana) and experiments in tobacco indicate that it has an essential function which is probably not related to photosynthesis. The chain is Protein Ycf2 from Citrus sinensis (Sweet orange).